Here is a 314-residue protein sequence, read N- to C-terminus: Putative S-adenosyl-L-methionine-dependent methyltransferase MAP_0256 (314 aa).

S-adenosyl-L-methionine contacts are provided by residues aspartate 132 and 161–162 (DL).

This sequence belongs to the UPF0677 family.

Its function is as follows. Exhibits S-adenosyl-L-methionine-dependent methyltransferase activity. The sequence is that of Putative S-adenosyl-L-methionine-dependent methyltransferase MAP_0256 from Mycolicibacterium paratuberculosis (strain ATCC BAA-968 / K-10) (Mycobacterium paratuberculosis).